Here is a 611-residue protein sequence, read N- to C-terminus: Aspartate--tRNA ligase, mitochondrial (611 aa).

A mitochondrion-targeting transit peptide spans 1–30 (MVLSRLPACLLPLVGTKVSIQGWLVATSRQ). Position 192 (Glu192) interacts with L-aspartate. The interval 216–219 (QQYK) is aspartate. Arg238 provides a ligand contact to L-aspartate. ATP is bound by residues 238 to 240 (RDE) and Glu502. Arg509 is a binding site for L-aspartate. 554 to 557 (GFDR) serves as a coordination point for ATP.

The protein belongs to the class-II aminoacyl-tRNA synthetase family. Type 1 subfamily.

The protein resides in the mitochondrion. The catalysed reaction is tRNA(Asp) + L-aspartate + ATP = L-aspartyl-tRNA(Asp) + AMP + diphosphate. The protein is Aspartate--tRNA ligase, mitochondrial (msd1) of Schizosaccharomyces pombe (strain 972 / ATCC 24843) (Fission yeast).